The following is a 477-amino-acid chain: 3-isopropylmalate dehydratase large subunit (477 aa).

[4Fe-4S] cluster-binding residues include Cys352, Cys413, and Cys416.

The protein belongs to the aconitase/IPM isomerase family. LeuC type 1 subfamily. As to quaternary structure, heterodimer of LeuC and LeuD. The cofactor is [4Fe-4S] cluster.

The catalysed reaction is (2R,3S)-3-isopropylmalate = (2S)-2-isopropylmalate. The protein operates within amino-acid biosynthesis; L-leucine biosynthesis; L-leucine from 3-methyl-2-oxobutanoate: step 2/4. Its function is as follows. Catalyzes the isomerization between 2-isopropylmalate and 3-isopropylmalate, via the formation of 2-isopropylmaleate. The chain is 3-isopropylmalate dehydratase large subunit from Pseudomonas putida (strain GB-1).